A 1179-amino-acid chain; its full sequence is Serine/threonine-protein kinase pakG (1179 aa).

A coiled-coil region spans residues 12–53; the sequence is SKTNEDIELIKQKLKEDRELLEKERAQFEEERKIIFESLNKV. Positions 111 to 124 constitute a CRIB domain; the sequence is IGTPFNVQHKVHVD. Positions 139–390 constitute a Protein kinase domain; that stretch reads FLIDCILGTG…AIELLTHPFL (252 aa). ATP is bound by residues 145–153 and Lys-168; that span reads LGTGSYGTV. The active-site Proton acceptor is Asp-257. Disordered stretches follow at residues 414–469, 589–631, 705–1086, and 1121–1179; these read KKKK…SSLD, IGNS…NNNN, SSSS…PITL, and TEIN…SPKK. A coiled-coil region spans residues 621-668; sequence NNNNNNNNNNNEFLINQIKKELILDFNENMKQYINQQLTNLKEEMLKE. Low complexity-rich tracts occupy residues 705–723 and 743–761; these read SSSSSSSFLNSSPSSSNSS and LPPSQQSTPVTTTTTTSSP. Over residues 762–776 the composition is skewed to pro residues; sequence SPSPSPSPSPSPSSP. Composition is skewed to low complexity over residues 777–788 and 812–833; these read LPSSSTSTVNTP and NNNNTNNNNNNNNSNNNNNNNN. The segment covering 834-857 has biased composition (polar residues); it reads VIQSPKLNNRPLSPTTPTKQFNNR. Low complexity predominate over residues 864-891; the sequence is FNNRPPSPSKFNNRPPSPSNRPLSPKNS. The span at 892 to 946 shows a compositional bias: polar residues; the sequence is YNSLEKSNNGSISNNRPLSPKNSLEKSTTQNNTSSEDISTTTVTVTSEQGGTPIT. Residues 954–963 show a composition bias toward pro residues; sequence RPKPSPPPIP. Composition is skewed to low complexity over residues 964 to 997, 1024 to 1046, and 1053 to 1077; these read MNKSSPKRAPSPSSNRRLSSSFTAQSSTASTIAA, TTITSSTNSPIKPLSPLNKSPNS, and ITTSNISNNSNINNNNNNNSNSSSN. Positions 1121–1135 are enriched in polar residues; that stretch reads TEINLPSSSPSTPQK. Positions 1137-1158 are enriched in low complexity; sequence NTPSSIPTTPTTPTTNGGSVSS.

It belongs to the protein kinase superfamily. STE Ser/Thr protein kinase family. STE20 subfamily. Mg(2+) serves as cofactor.

The enzyme catalyses L-seryl-[protein] + ATP = O-phospho-L-seryl-[protein] + ADP + H(+). It carries out the reaction L-threonyl-[protein] + ATP = O-phospho-L-threonyl-[protein] + ADP + H(+). The chain is Serine/threonine-protein kinase pakG from Dictyostelium discoideum (Social amoeba).